The following is a 97-amino-acid chain: Co-chaperonin GroES (97 aa).

It belongs to the GroES chaperonin family. In terms of assembly, heptamer of 7 subunits arranged in a ring. Interacts with the chaperonin GroEL.

The protein resides in the cytoplasm. Together with the chaperonin GroEL, plays an essential role in assisting protein folding. The GroEL-GroES system forms a nano-cage that allows encapsulation of the non-native substrate proteins and provides a physical environment optimized to promote and accelerate protein folding. GroES binds to the apical surface of the GroEL ring, thereby capping the opening of the GroEL channel. This Yersinia enterocolitica protein is Co-chaperonin GroES.